Here is a 414-residue protein sequence, read N- to C-terminus: MSFSSLLPPPEHSPPDDVNSREVEIITKEHDFIVNALTKKEAVHSSNNNIGSFVGSQVANFNDVIPLRQKDFYGVQAPLPTTQEIELCKVRTQEVVNRLLHKFTDKGKAGYQKDTRKITTGSRIITIESKRQDPLQPSRQKNTSSKIVLPEDDETDTPILHATDDAKSKRLTKEERAKWNIPAAVSSWKNPMGYTVGLKHRAAHGKKTGNVGSINNKVSDIVAALDETDQEIREGIQQENELKRKQLKEEERIKEEKLRAIAERSKIQTQSSAVKKRGSRFEGGRHQNKKIKKEEPPIKSAAERLKELAYAQGREVSEKVILGAAKATTTGTGANVHYDSRLFSKGANAAAKRSEEQVYDNPLFVQQEIDSIYRVNAKSIDEANSVSASRYGPIQFTKAHSLDDKSTAKDEEET.

Disordered stretches follow at residues 128–159 (ESKR…DTPI) and 264–292 (RSKI…KKIK). Polar residues predominate over residues 135–146 (LQPSRQKNTSSK).

It belongs to the SNW family. As to quaternary structure, associated with the spliceosome.

The protein resides in the nucleus. Its function is as follows. Involved in pre-mRNA splicing. The sequence is that of Pre-mRNA-processing protein 45 (PRP45) from Candida glabrata (strain ATCC 2001 / BCRC 20586 / JCM 3761 / NBRC 0622 / NRRL Y-65 / CBS 138) (Yeast).